Here is a 645-residue protein sequence, read N- to C-terminus: MSVINCEEVKRDEFHTEKYYESYNIFGAHIVTEDEMRGVRFTVWAPHAKAMSVVGDFNEWDYEQHKMLQVTEEGIWSLFIPHIEEREIYKYAIETMAGDVIFKADPYAVYAEVRPNTASVVFDIKGYEWNDKNWSRKKKKKSVYKEAMTVYELHFGSWKKKEDGTLYSYREMAEELIPYVVEHQFTHIEIMPLVEHPYDRSWGYQGTGYYAATSRFGTPYDLMHFVDECHKYGIGVILDWVPGHFCKDAHGLYLFDGTPTYEYKDKDVQENPVWGTVNFDLGKREVRNFLISNALFWMRYFHIDGFRVDAVANMLYWNKEGQEQSNEHAVSFLRELNEAVFAEDEDFLMTAEDSTAWPLVTAPTYEGGLGFNYKWNMGWMNDVLKYMECAPEYRKYIHDKMTFSLLYTYSENFILPLSHDEVVHGKKSLLNKMPGDYWDKFAQLRLLYGYFFTHPGKKLLFMGGEFGQFDEWKDLEDLDWNLHDFEMHRYMHDYFKELIALYKRSKPLWQLDHSREGFQWIDANNNEQSIFSFIRQGDKQEDALVVVCNFTKATYENYKVGVPDFEYYNEILNSDAEQYGGSGQVNKKRLKTIQEPYHNQTAHVEITIPPFGVSILRPVKTRKGSKKQDGSKTKVRSNVTSRGKR.

The active-site Nucleophile is the Asp309. The active-site Proton donor is Glu352. The tract at residues 619–645 (VKTRKGSKKQDGSKTKVRSNVTSRGKR) is disordered. The span at 636–645 (RSNVTSRGKR) shows a compositional bias: polar residues.

Belongs to the glycosyl hydrolase 13 family. GlgB subfamily. Monomer.

The catalysed reaction is Transfers a segment of a (1-&gt;4)-alpha-D-glucan chain to a primary hydroxy group in a similar glucan chain.. Its pathway is glycan biosynthesis; glycogen biosynthesis. Its function is as follows. Catalyzes the formation of the alpha-1,6-glucosidic linkages in glycogen by scission of a 1,4-alpha-linked oligosaccharide from growing alpha-1,4-glucan chains and the subsequent attachment of the oligosaccharide to the alpha-1,6 position. The protein is 1,4-alpha-glucan branching enzyme GlgB of Bacillus cereus (strain 03BB102).